Consider the following 281-residue polypeptide: Bifunctional N-acyl-homoserine lactone acylase/prephenate dehydratase (281 aa).

Positions 6–181 (IIAFQGRPGA…NTTRFYIASR (176 aa)) constitute a Prephenate dehydratase domain. The region spanning 196–273 (TLLFRVNNQP…EQQEILGVYP (78 aa)) is the ACT domain. Alanine 207, leucine 208, asparagine 221, and methionine 222 together coordinate L-phenylalanine.

Homodimer.

It catalyses the reaction an N-acyl-L-homoserine lactone + H2O = L-homoserine lactone + a carboxylate. The catalysed reaction is prephenate + H(+) = 3-phenylpyruvate + CO2 + H2O. It participates in amino-acid biosynthesis; L-phenylalanine biosynthesis; phenylpyruvate from prephenate: step 1/1. Multifunctional enzyme that acts on N-acyl-homoserine lactones (AHLs), beta-lactam antibiotics and shows prephenate dehydratase activity. Acts as an acylase on AHL and hydrolyzes the amide bond of the acyl side-chain of AHL molecules, releasing homoserine lactone (HSL) and the fatty acid. Can use different 3-oxo-acyl homoserine lactones, such as 3-oxo-decanoyl homoserine lactone, which is the preferred substrate, 3-oxo-octanoyl homoserine lactone, 3-oxo-hexanoyl homoserine lactone and 3-oxo-dodecanoyl homoserine lactone. It can also degrade various beta-lactam antibiotics, including penicillin G, amoxicillin and ampicillin, but not cefotaxime. In addition, it can complement a phenylalanine auxotrophic E.coli mutant, which carries a kanamycin gene inserted into pheA, suggesting that GqqA can also function as a prephenate dehydratase. Involved in bacterial quorum quenching (QQ) and cellulose biofilm formation. This is Bifunctional N-acyl-homoserine lactone acylase/prephenate dehydratase from Komagataeibacter europaeus (Gluconacetobacter europaeus).